An 817-amino-acid polypeptide reads, in one-letter code: MPPPPEPRQIKRPRLSLSCIVCRRRKVRCGREHPECANCVRMKENCVYKTMVHDEFTGRVRQVSPPPVPQGDNPNGPEFCANNSEERTGGFTWSHWMSQGSGNVLDLSDEAPLPRPTISPASAPPPQKRSTQAKCDASSVPHPHHSSTILTPAPSSHPQVDLVYPTVPSWEEAIQLPDNHHASSRAGTSRTSSVSQDASPAVSESARAPSTSTSYSGLPSPDYLSVRRGARVRYIGQAFWGLVAGKETLSDDFFDCNRDASMEQSLTHISSLGMFNLLRSLPTKPVSDALLDAFFFAVWPLSPLVHGPTLRADYDNFWEWCRNSDRALPPEKVRDDPTFLCLLFAILYCGASAAPPTSWACTNLQSLRKETTIKHLKSAYTTSLSLCQHLEHPTLNTLVSTLLTAPFLDRDVAPMRNMVSVSTTVRIAQSMGLHREGTWSSSLSPVDREIRRRAWWYIIGLDVQSSISTGLPPCYATEALDIVSMIADTRDEDIGDLSNHRSPEPVPRPSEQSLAVILAIARSETARLQSKIVSRLQNGRRLAQTELTELVTSAKKLQQKLDTLIARVPSQGIPEKGFIPSRLAKASPLYQTPAFSPYVWFCYRHYGPLQCVFLILVYLHTFPESGDIVLARYCIDEIIDHTVSHYQVPQDSFGATRADNSESDEGATEDQIPLAIQVLVDLHNRLQSHPRSDNQTTDRLDGNEYQFSPYSLELGIQGTEEDTIDKSIFSLPSLSSSSSRTHIHRNQEAPSTTTAPQMPSGTKHGPPSSVFVADSDGGSDLDILASLSDFETWSSSLVVDPSDILAHPTSMAPHHPV.

The zn(2)-C6 fungal-type DNA-binding region spans 19 to 46; that stretch reads CIVCRRRKVRCGREHPECANCVRMKENC. Disordered regions lie at residues 102 to 161, 180 to 218, and 733 to 775; these read GNVL…PQVD, HHAS…YSGL, and SLSS…VADS. The span at 113–127 shows a compositional bias: pro residues; sequence LPRPTISPASAPPPQ. Residues 146 to 158 show a composition bias toward polar residues; it reads SSTILTPAPSSHP. Residues 184-195 show a composition bias toward low complexity; the sequence is SRAGTSRTSSVS. Composition is skewed to polar residues over residues 208 to 217 and 748 to 760; these read APSTSTSYSG and EAPS…QMPS.

It localises to the nucleus. Transcription factor that regulates the expression of the gene cluster that mediates the biosynthesis of yanuthone D, a fungal isoprenoid epoxycyclohexenone that acts as an antibiotic against fungi and bacteria. This chain is Transcription factor yanR, found in Aspergillus niger (strain ATCC 1015 / CBS 113.46 / FGSC A1144 / LSHB Ac4 / NCTC 3858a / NRRL 328 / USDA 3528.7).